The sequence spans 456 residues: IQ domain-containing protein IQM3 (456 aa).

The region spanning 46–75 is the IQ domain; it reads TRLAAVKVQKVYRSYRTRRRLADSVVVAEE. The disordered stretch occupies residues 315 to 358; that stretch reads SEDSDSYDDYVKSNGGSEPEPLKKEDTTFQAETETDENGNGTVG.

As to expression, expressed in roots, rosette and cauline leaves, flowers and siliques, and at lower levels in stems.

The protein resides in the cytoplasm. It is found in the nucleus. May be involved in biotic and abiotic stress responses. This chain is IQ domain-containing protein IQM3, found in Arabidopsis thaliana (Mouse-ear cress).